The chain runs to 327 residues: Phospho-N-acetylmuramoyl-pentapeptide-transferase (327 aa).

Helical transmembrane passes span 3–23 (IALI…PAFI), 51–71 (TMGG…IGLF), 75–95 (LSNG…VGFL), 115–135 (LFLQ…HGAG), 140–160 (IFTV…FWLI), 172–192 (IDGL…VIAV), 197–217 (FDIL…FVFN), 223–243 (IFMG…ISIS), 248–268 (WTLL…MMQV), and 306–326 (VDFF…AILY).

Belongs to the glycosyltransferase 4 family. MraY subfamily. Mg(2+) is required as a cofactor.

It is found in the cell membrane. It catalyses the reaction UDP-N-acetyl-alpha-D-muramoyl-L-alanyl-gamma-D-glutamyl-L-lysyl-D-alanyl-D-alanine + di-trans,octa-cis-undecaprenyl phosphate = Mur2Ac(oyl-L-Ala-gamma-D-Glu-L-Lys-D-Ala-D-Ala)-di-trans,octa-cis-undecaprenyl diphosphate + UMP. It participates in cell wall biogenesis; peptidoglycan biosynthesis. Catalyzes the initial step of the lipid cycle reactions in the biosynthesis of the cell wall peptidoglycan: transfers peptidoglycan precursor phospho-MurNAc-pentapeptide from UDP-MurNAc-pentapeptide onto the lipid carrier undecaprenyl phosphate, yielding undecaprenyl-pyrophosphoryl-MurNAc-pentapeptide, known as lipid I. The polypeptide is Phospho-N-acetylmuramoyl-pentapeptide-transferase (Streptococcus sanguinis (strain SK36)).